A 278-amino-acid chain; its full sequence is Cytidine kinase (278 aa).

203–208 lines the ATP pocket; it reads TRGEKG. Catalysis depends on aspartate 237, which acts as the Proton acceptor.

Belongs to the carbohydrate kinase PfkB family. It depends on Mg(2+) as a cofactor.

The catalysed reaction is cytidine + ATP = CMP + ADP + H(+). Its function is as follows. Involved in nucleoside degradation. Phosphorylates cytidine to CMP. Can also act on deoxycytidine and uridine, but is most active with cytidine. ATP is the most preferred phosphate donor, but it can also use GTP, CTP or UTP. This is Cytidine kinase from Thermococcus kodakarensis (strain ATCC BAA-918 / JCM 12380 / KOD1) (Pyrococcus kodakaraensis (strain KOD1)).